Here is a 476-residue protein sequence, read N- to C-terminus: Glutamyl-tRNA(Gln) amidotransferase subunit A (476 aa).

Residues K70 and S145 each act as charge relay system in the active site. The active-site Acyl-ester intermediate is S169.

The protein belongs to the amidase family. GatA subfamily. As to quaternary structure, heterotrimer of A, B and C subunits.

It carries out the reaction L-glutamyl-tRNA(Gln) + L-glutamine + ATP + H2O = L-glutaminyl-tRNA(Gln) + L-glutamate + ADP + phosphate + H(+). Functionally, allows the formation of correctly charged Gln-tRNA(Gln) through the transamidation of misacylated Glu-tRNA(Gln) in organisms which lack glutaminyl-tRNA synthetase. The reaction takes place in the presence of glutamine and ATP through an activated gamma-phospho-Glu-tRNA(Gln). The sequence is that of Glutamyl-tRNA(Gln) amidotransferase subunit A from Methanosarcina mazei (strain ATCC BAA-159 / DSM 3647 / Goe1 / Go1 / JCM 11833 / OCM 88) (Methanosarcina frisia).